A 1153-amino-acid polypeptide reads, in one-letter code: PPi-type phosphoenolpyruvate carboxykinase 3 (1153 aa).

Residues arginine 1085–glutamate 1131 are a coiled coil.

The protein belongs to the PPi-type phosphoenolpyruvate carboxykinase family. As to quaternary structure, monomer and trimer; forms heterotrimers with PEPCK1 and PEPCK2.

Its subcellular location is the cytoplasm. The protein resides in the cytosol. The catalysed reaction is oxaloacetate + diphosphate = phosphoenolpyruvate + phosphate + CO2. Functionally, inorganic pyrophosphate (PPi)-dependent phosphoenolpyruvate carboxykinase, which regulates the carbon flow of the central metabolism by fixing CO(2) to phosphoenolpyruvate to produce oxaloacetate. Can also produce pyruvate and diphosphate from phosphoenolpyruvate and phosphate. This Entamoeba histolytica (strain ATCC 30459 / HM-1:IMSS / ABRM) protein is PPi-type phosphoenolpyruvate carboxykinase 3.